We begin with the raw amino-acid sequence, 176 residues long: MQVDVHIQWDLEDRAIPSSLVENVLKQAHQITAVTWQSWFQHWFEHLQPSISPIQTYELSLLLTDDAAIQNLNATYRHLDRPTDVLAFATLDLTEQPTDLWSEMPVELGDIIISVETAAQQAQEQQHPLPQELAWLATHGLLHLLGWDHPTPERLQDMLAQQQLLINLTNVSAATS.

Histidine 139, histidine 143, and histidine 149 together coordinate Zn(2+).

This sequence belongs to the endoribonuclease YbeY family. Zn(2+) is required as a cofactor.

Its subcellular location is the cytoplasm. Single strand-specific metallo-endoribonuclease involved in late-stage 70S ribosome quality control and in maturation of the 3' terminus of the 16S rRNA. The polypeptide is Endoribonuclease YbeY (Acaryochloris marina (strain MBIC 11017)).